Here is a 701-residue protein sequence, read N- to C-terminus: MAQKDVLTDLTKVRNIGIMAHIDAGKTTTTERILYYTGISYKIGEVHDGAATMDWMEQEQERGITITSAATTCFWNDNQINIIDTPGHVDFTVEVERSLRVLDGAVAVFDGKEGVEPQSEQVWRQADKYDVPRICFVNKMDKIGADFYFSVRTMEERLGANVIPIQLPVGSEGDFEGVVDLVEMKAKVWSADAKLGEKYDVVDIPADLQEKADEYRTKLLEAVAETDEALLEKYLGGEELTEAEIKGAIRKLTITSEAYPVLCGSAFKNKGVQPMLDAVIDYLPSPLDVPAAIGHVPGKEDEEVVRKPSTDEPFSALAFKVATHPFFGKLTYVRVYSGKVDSGSQVINSTKGKKERLGKLFQMHSNKESPVETASAGHIYAVIGLKDTTTGDTLSDPNNQIVLESMTFPDPVIEVAIEPKTKSDQEKLSLSIQKLAEEDPTFKVHLDQETGQTVIGGMGELHLDILVDRMRREFKVEANVGKPQVAYKETIKRLVEKVEFTHKKQTGGSGQFAKVLISIEPFTGEDGATYEFESKVTGGRIPREYIPSVDAGAQDAMQYGVLAGYPLVNLKVTLLDGAFHEVDSSEMAFKIAGSQVLKKAAAAAHPVILEPIMAVEVTTPEDYMGDVIGDLNSRRGQIQAMEERSGARVVKAHVPLSEMFGYVGDLRSKTQGRANYSMVFDSYAEVPANVSKEIIAKATGE.

The tr-type G domain maps to 11–287; sequence TKVRNIGIMA…AVIDYLPSPL (277 aa). GTP contacts are provided by residues 20–27, 84–88, and 138–141; these read AHIDAGKT, DTPGH, and NKMD.

This sequence belongs to the TRAFAC class translation factor GTPase superfamily. Classic translation factor GTPase family. EF-G/EF-2 subfamily.

The protein resides in the cytoplasm. Catalyzes the GTP-dependent ribosomal translocation step during translation elongation. During this step, the ribosome changes from the pre-translocational (PRE) to the post-translocational (POST) state as the newly formed A-site-bound peptidyl-tRNA and P-site-bound deacylated tRNA move to the P and E sites, respectively. Catalyzes the coordinated movement of the two tRNA molecules, the mRNA and conformational changes in the ribosome. In Mycobacterium ulcerans (strain Agy99), this protein is Elongation factor G.